The chain runs to 330 residues: Virulence plasmid integrase pGP8-D (330 aa).

The region spanning 39-124 is the Core-binding (CB) domain; the sequence is FSLFEVIMHW…SYISLTRFLN (86 aa). Positions 152–327 constitute a Tyr recombinase domain; the sequence is VKTDAMNSLQ…SREDNASKKM (176 aa). Residues Arg189, Lys214, His279, Arg282, and His305 contribute to the active site. The active-site O-(3'-phospho-DNA)-tyrosine intermediate is Tyr314.

Belongs to the 'phage' integrase family.

The polypeptide is Virulence plasmid integrase pGP8-D (Chlamydia trachomatis serovar L2 (strain ATCC VR-902B / DSM 19102 / 434/Bu)).